A 162-amino-acid polypeptide reads, in one-letter code: Peptide methionine sulfoxide reductase MsrA (162 aa).

Residue C10 is part of the active site.

Belongs to the MsrA Met sulfoxide reductase family.

The catalysed reaction is L-methionyl-[protein] + [thioredoxin]-disulfide + H2O = L-methionyl-(S)-S-oxide-[protein] + [thioredoxin]-dithiol. The enzyme catalyses [thioredoxin]-disulfide + L-methionine + H2O = L-methionine (S)-S-oxide + [thioredoxin]-dithiol. Functionally, has an important function as a repair enzyme for proteins that have been inactivated by oxidation. Catalyzes the reversible oxidation-reduction of methionine sulfoxide in proteins to methionine. In Clostridium acetobutylicum (strain ATCC 824 / DSM 792 / JCM 1419 / IAM 19013 / LMG 5710 / NBRC 13948 / NRRL B-527 / VKM B-1787 / 2291 / W), this protein is Peptide methionine sulfoxide reductase MsrA.